We begin with the raw amino-acid sequence, 27 residues long: Alpha-amylase/trypsin inhibitor CM17 (27 aa).

Belongs to the protease inhibitor I6 (cereal trypsin/alpha-amylase inhibitor) family. As to expression, developing endosperm.

Its subcellular location is the secreted. In terms of biological role, alpha-amylase/trypsin inhibitor. It could be involved in insect defense mechanisms. This Triticum aestivum (Wheat) protein is Alpha-amylase/trypsin inhibitor CM17.